We begin with the raw amino-acid sequence, 96 residues long: UPF0729 protein AGAP000931 (96 aa).

The interval 65–96 (VPPGHDPVGPTVAADTATSDAVDDAASSKKTL) is disordered. A compositionally biased stretch (low complexity) spans 75-96 (TVAADTATSDAVDDAASSKKTL).

Belongs to the UPF0729 family.

The sequence is that of UPF0729 protein AGAP000931 from Anopheles gambiae (African malaria mosquito).